The primary structure comprises 816 residues: Microbial collagenase (816 aa).

Residues 1 to 27 form the signal peptide; that stretch reads MSHIRFFPRHRLALACMLASVSSFSFA. A Zn(2+)-binding site is contributed by His-435. The active site involves Glu-436. Position 439 (His-439) interacts with Zn(2+).

It belongs to the peptidase M9A family. The cofactor is Zn(2+).

The protein resides in the secreted. It catalyses the reaction Digestion of native collagen in the triple helical region at Xaa-|-Gly bonds. With synthetic peptides, a preference is shown for Gly at P3 and P1', Pro and Ala at P2 and P2', and hydroxyproline, Ala or Arg at P3'.. Functionally, possesses gelatinolytic activity. Can cause weak haemolysis on blood agar. The protein is Microbial collagenase (prt) of Vibrio parahaemolyticus serotype O3:K6 (strain RIMD 2210633).